The following is a 20-amino-acid chain: Protein YfiS (20 aa).

The chain is Protein YfiS from Escherichia coli (strain K12).